Consider the following 244-residue polypeptide: 14-3-3 protein beta/alpha (244 aa).

Met1 is subject to N-acetylmethionine. Ser184 carries the post-translational modification Phosphoserine.

Belongs to the 14-3-3 family. Homodimer, and heterodimer with other family members. Post-translationally, phosphorylated.

The protein resides in the cytoplasm. Adapter protein implicated in the regulation of a large spectrum of both general and specialized signaling pathways. Binds to a large number of partners, usually by recognition of a phosphoserine or phosphothreonine motif. Binding generally results in the modulation of the activity of the binding partner. This is 14-3-3 protein beta/alpha (YWHAB) from Gallus gallus (Chicken).